The sequence spans 380 residues: Ribosomal RNA large subunit methyltransferase G (380 aa).

The protein belongs to the methyltransferase superfamily. RlmG family.

The protein resides in the cytoplasm. It carries out the reaction guanosine(1835) in 23S rRNA + S-adenosyl-L-methionine = N(2)-methylguanosine(1835) in 23S rRNA + S-adenosyl-L-homocysteine + H(+). Specifically methylates the guanine in position 1835 (m2G1835) of 23S rRNA. The protein is Ribosomal RNA large subunit methyltransferase G of Streptomyces avermitilis (strain ATCC 31267 / DSM 46492 / JCM 5070 / NBRC 14893 / NCIMB 12804 / NRRL 8165 / MA-4680).